A 127-amino-acid chain; its full sequence is Glycine cleavage system H protein (127 aa).

Residues 24–105 (TALVGITDFA…YNEGWIVKMK (82 aa)) form the Lipoyl-binding domain. Residue K65 is modified to N6-lipoyllysine.

The protein belongs to the GcvH family. As to quaternary structure, the glycine cleavage system is composed of four proteins: P, T, L and H. It depends on (R)-lipoate as a cofactor.

The glycine cleavage system catalyzes the degradation of glycine. The H protein shuttles the methylamine group of glycine from the P protein to the T protein. This chain is Glycine cleavage system H protein, found in Chlorobaculum tepidum (strain ATCC 49652 / DSM 12025 / NBRC 103806 / TLS) (Chlorobium tepidum).